A 467-amino-acid polypeptide reads, in one-letter code: Coiled-coil domain-containing protein 174 (467 aa).

2 disordered regions span residues 40–77 (VFGK…EEQK) and 124–162 (EMEA…SEEW). The stretch at 63-99 (NRAEKDAEQKIEEQKTLDKAREKLEEKAKLYEKMTKG) forms a coiled coil. 2 stretches are compositionally biased toward basic and acidic residues: residues 64–77 (RAEK…EEQK) and 124–139 (EMEA…KAGE). Position 197 is a phosphoserine (S197). Positions 267 to 309 (LEMLREQTTDQRTKRENIKEKRKAILEARLAKLRQKKMKKSKE) form a coiled coil. 2 disordered regions span residues 299 to 363 (LRQK…HIRE) and 378 to 453 (RQSD…TVTF). The segment covering 324–336 (PLPPEPEAVPTPR) has biased composition (pro residues). 2 stretches are compositionally biased toward basic and acidic residues: residues 348–363 (VQER…HIRE) and 378–389 (RQSDLRAERDPE). Over residues 425-437 (PDQSHGPSPEHTS) the composition is skewed to polar residues. Pro residues predominate over residues 439–448 (TPAPDNPPQA).

As to expression, widely expressed.

Its subcellular location is the nucleus. Probably involved in neuronal development. This chain is Coiled-coil domain-containing protein 174 (CCDC174), found in Homo sapiens (Human).